Here is a 1020-residue protein sequence, read N- to C-terminus: Neurofilament heavy polypeptide (1020 aa).

Residues methionine 1–glutamine 100 form a head region. A disordered region spans residues valine 58–glycine 83. Positions alanine 71 to asparagine 82 are enriched in polar residues. 2 positions are modified to phosphoserine: serine 76 and serine 124. The IF rod domain occupies glutamate 97 to isoleucine 413. The tract at residues leucine 101–leucine 132 is coil 1A. Residues arginine 133–leucine 145 are linker 1. The coil 1B stretch occupies residues tyrosine 146–glutamine 244. The tract at residues isoleucine 245–aspartate 266 is linker 12. The segment at valine 267 to glutamine 288 is coil 2A. The linker 2 stretch occupies residues serine 289–tryptophan 292. Positions phenylalanine 293 to isoleucine 413 are coil 2B. Residues serine 347 and serine 421 each carry the phosphoserine modification. Residues glycine 414–lysine 1020 are tail. Positions isoleucine 456–lysine 1020 are disordered. Acidic residues-rich tracts occupy residues glutamate 459–glutamate 475 and glycine 483–glutamate 498. 28 positions are modified to phosphoserine: serine 511, serine 526, serine 532, serine 540, serine 546, serine 552, serine 560, serine 566, serine 574, serine 580, serine 586, serine 594, serine 600, serine 606, serine 614, serine 620, serine 628, serine 634, serine 640, serine 648, serine 654, serine 662, serine 668, serine 676, serine 682, serine 690, serine 696, and serine 704. Residues serine 511–lysine 1020 show a composition bias toward basic and acidic residues. 4 consecutive repeat copies span residues lysine 525–alanine 530, lysine 531–glutamate 536, lysine 539–valine 544, and lysine 545–alanine 550. Residues lysine 525 to glutamate 826 form a 30 X 6 AA repeats of K-S-P-[AEPV]-[EAK]-[AEVK] region. Repeat unit 5 spans residues lysine 559 to alanine 564. Tandem repeats lie at residues lysine 573–valine 578 and lysine 579–alanine 584. Repeat copies occupy residues lysine 593 to alanine 598 and lysine 599 to alanine 604. Repeat unit 10 spans residues lysine 613–alanine 618. 4 consecutive repeat copies span residues lysine 627 to valine 632, lysine 633 to alanine 638, lysine 639 to glutamate 644, and lysine 647 to alanine 652. A run of 12 repeats spans residues lysine 661–alanine 666, lysine 667–alanine 672, lysine 675–alanine 680, lysine 681–alanine 686, lysine 689–alanine 694, lysine 695–glutamate 700, lysine 703–alanine 708, lysine 709–glutamate 714, lysine 717–alanine 722, lysine 723–glutamate 728, lysine 737–glutamate 742, and lysine 745–alanine 750. Phosphoserine is present on residues serine 718, serine 724, and serine 738. Residues serine 752 and serine 763 each carry the phosphoserine modification. The stretch at lysine 762–lysine 767 is repeat 27. Threonine 768 is subject to Phosphothreonine. 3 consecutive repeat copies span residues lysine 786–glutamate 791, lysine 794–alanine 799, and lysine 821–glutamate 826. A phosphoserine mark is found at serine 787, serine 795, serine 822, and serine 888.

This sequence belongs to the intermediate filament family. As to quaternary structure, forms heterodimers with NEFL; which can further hetero-oligomerize (in vitro). Forms heterodimers with INA (in vitro). In terms of processing, there are a number of repeats of the tripeptide K-S-P, NFH is phosphorylated on a number of the serines in this motif. It is thought that phosphorylation of NFH results in the formation of interfilament cross bridges that are important in the maintenance of axonal caliber. Post-translationally, phosphorylation seems to play a major role in the functioning of the larger neurofilament polypeptides (NF-M and NF-H), the levels of phosphorylation being altered developmentally and coincidentally with a change in the neurofilament function. Phosphorylated in the head and rod regions by the PKC kinase PKN1, leading to the inhibition of polymerization.

Its subcellular location is the cytoplasm. The protein resides in the cytoskeleton. It localises to the cell projection. The protein localises to the axon. Functionally, neurofilaments usually contain three intermediate filament proteins: NEFL, NEFM, and NEFH which are involved in the maintenance of neuronal caliber. NEFH has an important function in mature axons that is not subserved by the two smaller NF proteins. May additionally cooperate with the neuronal intermediate filament proteins PRPH and INA to form neuronal filamentous networks. The sequence is that of Neurofilament heavy polypeptide (NEFH) from Homo sapiens (Human).